Consider the following 135-residue polypeptide: Protein PsiE homolog (135 aa).

4 helical membrane passes run 20–40, 54–74, 82–102, and 107–127; these read VGLI…TIHL, YMLI…ALIV, HFPL…LIIV, and PIDT…LYLA.

Belongs to the PsiE family.

The protein resides in the cell inner membrane. The polypeptide is Protein PsiE homolog (Yersinia pestis (strain Pestoides F)).